A 174-amino-acid polypeptide reads, in one-letter code: ATP-dependent protease subunit HslV (174 aa).

The active site involves Thr-2. Na(+)-binding residues include Gly-157, Cys-160, and Thr-163.

It belongs to the peptidase T1B family. HslV subfamily. As to quaternary structure, a double ring-shaped homohexamer of HslV is capped on each side by a ring-shaped HslU homohexamer. The assembly of the HslU/HslV complex is dependent on binding of ATP.

Its subcellular location is the cytoplasm. It carries out the reaction ATP-dependent cleavage of peptide bonds with broad specificity.. Its activity is regulated as follows. Allosterically activated by HslU binding. In terms of biological role, protease subunit of a proteasome-like degradation complex believed to be a general protein degrading machinery. In Shewanella oneidensis (strain ATCC 700550 / JCM 31522 / CIP 106686 / LMG 19005 / NCIMB 14063 / MR-1), this protein is ATP-dependent protease subunit HslV.